Here is an 88-residue protein sequence, read N- to C-terminus: Small ribosomal subunit protein uS15 (88 aa).

This sequence belongs to the universal ribosomal protein uS15 family. Part of the 30S ribosomal subunit. Forms a bridge to the 50S subunit in the 70S ribosome, contacting the 23S rRNA.

Functionally, one of the primary rRNA binding proteins, it binds directly to 16S rRNA where it helps nucleate assembly of the platform of the 30S subunit by binding and bridging several RNA helices of the 16S rRNA. Its function is as follows. Forms an intersubunit bridge (bridge B4) with the 23S rRNA of the 50S subunit in the ribosome. This chain is Small ribosomal subunit protein uS15, found in Desulfitobacterium hafniense (strain Y51).